Here is a 246-residue protein sequence, read N- to C-terminus: Bis(5'-nucleosyl)-tetraphosphatase PrpE [asymmetrical] (246 aa).

Belongs to the PrpE family. Ni(2+) is required as a cofactor.

The catalysed reaction is P(1),P(4)-bis(5'-guanosyl) tetraphosphate + H2O = GMP + GTP + 2 H(+). Its function is as follows. Asymmetrically hydrolyzes Ap4p to yield AMP and ATP. This chain is Bis(5'-nucleosyl)-tetraphosphatase PrpE [asymmetrical], found in Halalkalibacterium halodurans (strain ATCC BAA-125 / DSM 18197 / FERM 7344 / JCM 9153 / C-125) (Bacillus halodurans).